We begin with the raw amino-acid sequence, 1083 residues long: Carbamoyl phosphate synthase large chain (1083 aa).

Residues 1–402 (MPRRDDIKKI…SFQKALRGLE (402 aa)) form a carboxyphosphate synthetic domain region. Residues R129, R169, G175, G176, E208, I210, E215, G241, V242, H243, Q285, and E299 each coordinate ATP. In terms of domain architecture, ATP-grasp 1 spans 133 to 328 (KQAMDKIGLD…IAKIAAKLAV (196 aa)). Residues Q285, E299, and N301 each contribute to the Mg(2+) site. Positions 285, 299, and 301 each coordinate Mn(2+). Residues 403–557 (VGAFGFGSDP…YSTYESETEV (155 aa)) form an oligomerization domain region. A carbamoyl phosphate synthetic domain region spans residues 558–944 (PAKGDKKRVV…AFAKSQLAAG (387 aa)). One can recognise an ATP-grasp 2 domain in the interval 683–878 (SSLIDELGLR…VANLATKVMA (196 aa)). ATP contacts are provided by R719, R758, L760, E765, G790, V791, H792, S793, Q833, and E849. 3 residues coordinate Mg(2+): Q833, E849, and N851. Mn(2+)-binding residues include Q833, E849, and N851. The region spanning 945–1083 (TVLPESGKIF…SLQRRYAQNV (139 aa)) is the MGS-like domain. Residues 945-1083 (TVLPESGKIF…SLQRRYAQNV (139 aa)) are allosteric domain.

The protein belongs to the CarB family. As to quaternary structure, composed of two chains; the small (or glutamine) chain promotes the hydrolysis of glutamine to ammonia, which is used by the large (or ammonia) chain to synthesize carbamoyl phosphate. Tetramer of heterodimers (alpha,beta)4. It depends on Mg(2+) as a cofactor. Mn(2+) serves as cofactor.

It carries out the reaction hydrogencarbonate + L-glutamine + 2 ATP + H2O = carbamoyl phosphate + L-glutamate + 2 ADP + phosphate + 2 H(+). The catalysed reaction is hydrogencarbonate + NH4(+) + 2 ATP = carbamoyl phosphate + 2 ADP + phosphate + 2 H(+). It functions in the pathway amino-acid biosynthesis; L-arginine biosynthesis; carbamoyl phosphate from bicarbonate: step 1/1. It participates in pyrimidine metabolism; UMP biosynthesis via de novo pathway; (S)-dihydroorotate from bicarbonate: step 1/3. Large subunit of the glutamine-dependent carbamoyl phosphate synthetase (CPSase). CPSase catalyzes the formation of carbamoyl phosphate from the ammonia moiety of glutamine, carbonate, and phosphate donated by ATP, constituting the first step of 2 biosynthetic pathways, one leading to arginine and/or urea and the other to pyrimidine nucleotides. The large subunit (synthetase) binds the substrates ammonia (free or transferred from glutamine from the small subunit), hydrogencarbonate and ATP and carries out an ATP-coupled ligase reaction, activating hydrogencarbonate by forming carboxy phosphate which reacts with ammonia to form carbamoyl phosphate. The sequence is that of Carbamoyl phosphate synthase large chain from Rhodopirellula baltica (strain DSM 10527 / NCIMB 13988 / SH1).